A 206-amino-acid chain; its full sequence is Ribosomal RNA small subunit methyltransferase G (206 aa).

S-adenosyl-L-methionine-binding positions include G73, L78, 124-125 (VE), and R139.

The protein belongs to the methyltransferase superfamily. RNA methyltransferase RsmG family.

Its subcellular location is the cytoplasm. It catalyses the reaction guanosine(527) in 16S rRNA + S-adenosyl-L-methionine = N(7)-methylguanosine(527) in 16S rRNA + S-adenosyl-L-homocysteine. Its function is as follows. Specifically methylates the N7 position of guanine in position 527 of 16S rRNA. The protein is Ribosomal RNA small subunit methyltransferase G of Idiomarina loihiensis (strain ATCC BAA-735 / DSM 15497 / L2-TR).